The sequence spans 283 residues: Poly(3-hydroxyalkanoate) depolymerase (283 aa).

The 224-residue stretch at 30–253 (PLLIFNGIGA…IDDGHLFLIT (224 aa)) folds into the AB hydrolase-1 domain. Ser102 functions as the Charge relay system in the catalytic mechanism.

Belongs to the AB hydrolase superfamily. Lipase family.

In terms of biological role, complements a mutant that does not degrade PHA; might be a lipase. In Ectopseudomonas oleovorans (Pseudomonas oleovorans), this protein is Poly(3-hydroxyalkanoate) depolymerase.